The following is a 212-amino-acid chain: Transcriptional regulator GfcR (212 aa).

A disordered region spans residues 38–60 (LVERSGTGTEPDTSDDGGPHDIH).

It belongs to the purine/pyrimidine phosphoribosyltransferase family. GfcR subfamily.

In terms of biological role, DNA-binding transcriptional regulator that functions as a regulator of central sugar catabolic pathways. This Haloarcula marismortui (strain ATCC 43049 / DSM 3752 / JCM 8966 / VKM B-1809) (Halobacterium marismortui) protein is Transcriptional regulator GfcR.